The following is a 715-amino-acid chain: Fatty acid oxidation complex subunit alpha (715 aa).

The segment at 1–190 (MIYEGKAITV…KVGAVDAVVA (190 aa)) is enoyl-CoA hydratase/isomerase. D297 is a substrate binding site. The interval 312–715 (HDVKQAAVLG…MAKNGQRFFN (404 aa)) is 3-hydroxyacyl-CoA dehydrogenase. Residues M325, D344, 401-403 (VVE), K408, and S430 each bind NAD(+). The For 3-hydroxyacyl-CoA dehydrogenase activity role is filled by H451. N454 lines the NAD(+) pocket. Substrate-binding residues include N501 and Y660.

It in the N-terminal section; belongs to the enoyl-CoA hydratase/isomerase family. This sequence in the C-terminal section; belongs to the 3-hydroxyacyl-CoA dehydrogenase family. Heterotetramer of two alpha chains (FadB) and two beta chains (FadA).

It catalyses the reaction a (3S)-3-hydroxyacyl-CoA + NAD(+) = a 3-oxoacyl-CoA + NADH + H(+). It carries out the reaction a (3S)-3-hydroxyacyl-CoA = a (2E)-enoyl-CoA + H2O. The catalysed reaction is a 4-saturated-(3S)-3-hydroxyacyl-CoA = a (3E)-enoyl-CoA + H2O. The enzyme catalyses (3S)-3-hydroxybutanoyl-CoA = (3R)-3-hydroxybutanoyl-CoA. It catalyses the reaction a (3Z)-enoyl-CoA = a 4-saturated (2E)-enoyl-CoA. It carries out the reaction a (3E)-enoyl-CoA = a 4-saturated (2E)-enoyl-CoA. Its pathway is lipid metabolism; fatty acid beta-oxidation. Its function is as follows. Involved in the aerobic and anaerobic degradation of long-chain fatty acids via beta-oxidation cycle. Catalyzes the formation of 3-oxoacyl-CoA from enoyl-CoA via L-3-hydroxyacyl-CoA. It can also use D-3-hydroxyacyl-CoA and cis-3-enoyl-CoA as substrate. The chain is Fatty acid oxidation complex subunit alpha from Pseudomonas putida (strain ATCC 700007 / DSM 6899 / JCM 31910 / BCRC 17059 / LMG 24140 / F1).